The primary structure comprises 210 residues: Na(+)-translocating NADH-quinone reductase subunit D (210 aa).

A run of 5 helical transmembrane segments spans residues 42–62, 72–92, 103–123, 131–151, and 178–198; these read FVMTLAVTAVTAFSNLFISLI, IIAQMAVIASLVIVVDQVLKA, VFVGLIITNCIVMGRAEAYAM, FLDGIGNGLGYGAVLLTVATV, and NGLLLLPPSAFFIIGLIIWGV.

It belongs to the NqrDE/RnfAE family. Composed of six subunits; NqrA, NqrB, NqrC, NqrD, NqrE and NqrF.

Its subcellular location is the cell inner membrane. It carries out the reaction a ubiquinone + n Na(+)(in) + NADH + H(+) = a ubiquinol + n Na(+)(out) + NAD(+). Its function is as follows. NQR complex catalyzes the reduction of ubiquinone-1 to ubiquinol by two successive reactions, coupled with the transport of Na(+) ions from the cytoplasm to the periplasm. NqrA to NqrE are probably involved in the second step, the conversion of ubisemiquinone to ubiquinol. The sequence is that of Na(+)-translocating NADH-quinone reductase subunit D from Aeromonas hydrophila subsp. hydrophila (strain ATCC 7966 / DSM 30187 / BCRC 13018 / CCUG 14551 / JCM 1027 / KCTC 2358 / NCIMB 9240 / NCTC 8049).